Reading from the N-terminus, the 328-residue chain is Methionyl-tRNA formyltransferase (328 aa).

121–124 (SLLP) provides a ligand contact to (6S)-5,6,7,8-tetrahydrofolate.

It belongs to the Fmt family.

It catalyses the reaction L-methionyl-tRNA(fMet) + (6R)-10-formyltetrahydrofolate = N-formyl-L-methionyl-tRNA(fMet) + (6S)-5,6,7,8-tetrahydrofolate + H(+). Functionally, attaches a formyl group to the free amino group of methionyl-tRNA(fMet). The formyl group appears to play a dual role in the initiator identity of N-formylmethionyl-tRNA by promoting its recognition by IF2 and preventing the misappropriation of this tRNA by the elongation apparatus. The protein is Methionyl-tRNA formyltransferase of Paraburkholderia phytofirmans (strain DSM 17436 / LMG 22146 / PsJN) (Burkholderia phytofirmans).